We begin with the raw amino-acid sequence, 59 residues long: Sperm protamine P1-type (59 aa).

A disordered region spans residues Met1–Ser59.

It belongs to the protamine P1 family. Testis.

The protein localises to the nucleus. Its subcellular location is the chromosome. Protamines substitute for histones in the chromatin of sperm during the haploid phase of spermatogenesis. They compact sperm DNA into a highly condensed, stable and inactive complex. The sequence is that of Sperm protamine P1-type from Chrysemys picta bellii (Western painted turtle).